We begin with the raw amino-acid sequence, 171 residues long: 3-hydroxydecanoyl-[acyl-carrier-protein] dehydratase (171 aa).

The active site involves His-70.

It belongs to the thioester dehydratase family. FabA subfamily. Homodimer.

The protein localises to the cytoplasm. It carries out the reaction a (3R)-hydroxyacyl-[ACP] = a (2E)-enoyl-[ACP] + H2O. The enzyme catalyses (3R)-hydroxydecanoyl-[ACP] = (2E)-decenoyl-[ACP] + H2O. The catalysed reaction is (2E)-decenoyl-[ACP] = (3Z)-decenoyl-[ACP]. Its pathway is lipid metabolism; fatty acid biosynthesis. Its function is as follows. Necessary for the introduction of cis unsaturation into fatty acids. Catalyzes the dehydration of (3R)-3-hydroxydecanoyl-ACP to E-(2)-decenoyl-ACP and then its isomerization to Z-(3)-decenoyl-ACP. Can catalyze the dehydratase reaction for beta-hydroxyacyl-ACPs with saturated chain lengths up to 16:0, being most active on intermediate chain length. This Xanthomonas euvesicatoria pv. vesicatoria (strain 85-10) (Xanthomonas campestris pv. vesicatoria) protein is 3-hydroxydecanoyl-[acyl-carrier-protein] dehydratase.